Consider the following 82-residue polypeptide: Putative membrane protein insertion efficiency factor (82 aa).

It belongs to the UPF0161 family.

Its subcellular location is the cell inner membrane. Functionally, could be involved in insertion of integral membrane proteins into the membrane. In Thermus thermophilus (strain ATCC BAA-163 / DSM 7039 / HB27), this protein is Putative membrane protein insertion efficiency factor.